We begin with the raw amino-acid sequence, 559 residues long: Dihydroxy-acid dehydratase (559 aa).

Residue cysteine 52 participates in [2Fe-2S] cluster binding. Residue aspartate 84 participates in Mg(2+) binding. Residue cysteine 125 coordinates [2Fe-2S] cluster. Mg(2+)-binding residues include aspartate 126 and lysine 127. Lysine 127 carries the post-translational modification N6-carboxylysine. Cysteine 197 contributes to the [2Fe-2S] cluster binding site. Glutamate 447 contributes to the Mg(2+) binding site. The active-site Proton acceptor is the serine 473.

The protein belongs to the IlvD/Edd family. In terms of assembly, homodimer. [2Fe-2S] cluster is required as a cofactor. It depends on Mg(2+) as a cofactor.

It carries out the reaction (2R)-2,3-dihydroxy-3-methylbutanoate = 3-methyl-2-oxobutanoate + H2O. The enzyme catalyses (2R,3R)-2,3-dihydroxy-3-methylpentanoate = (S)-3-methyl-2-oxopentanoate + H2O. Its pathway is amino-acid biosynthesis; L-isoleucine biosynthesis; L-isoleucine from 2-oxobutanoate: step 3/4. The protein operates within amino-acid biosynthesis; L-valine biosynthesis; L-valine from pyruvate: step 3/4. Functionally, functions in the biosynthesis of branched-chain amino acids. Catalyzes the dehydration of (2R,3R)-2,3-dihydroxy-3-methylpentanoate (2,3-dihydroxy-3-methylvalerate) into 2-oxo-3-methylpentanoate (2-oxo-3-methylvalerate) and of (2R)-2,3-dihydroxy-3-methylbutanoate (2,3-dihydroxyisovalerate) into 2-oxo-3-methylbutanoate (2-oxoisovalerate), the penultimate precursor to L-isoleucine and L-valine, respectively. This is Dihydroxy-acid dehydratase from Roseiflexus sp. (strain RS-1).